Consider the following 803-residue polypeptide: Exo-1,4-beta-xylosidase xlnD (803 aa).

The N-terminal stretch at 1 to 18 (MRSLISVAVLSALPTAFS) is a signal peptide. Residues asparagine 21, asparagine 44, asparagine 85, asparagine 122, asparagine 140, and asparagine 234 are each glycosylated (N-linked (GlcNAc...) asparagine). Residue aspartate 307 is part of the active site. N-linked (GlcNAc...) asparagine glycans are attached at residues asparagine 437, asparagine 474, asparagine 515, asparagine 611, asparagine 676, and asparagine 698.

The protein belongs to the glycosyl hydrolase 3 family.

The protein resides in the secreted. It carries out the reaction Hydrolysis of (1-&gt;4)-beta-D-xylans, to remove successive D-xylose residues from the non-reducing termini.. It functions in the pathway glycan degradation; xylan degradation. Functionally, xylan 1,4-beta-xylosidase involved in the hydrolysis of xylan, a major structural heterogeneous polysaccharide found in plant biomass representing the second most abundant polysaccharide in the biosphere, after cellulose. The polypeptide is Exo-1,4-beta-xylosidase xlnD (xlnD) (Emericella nidulans (strain FGSC A4 / ATCC 38163 / CBS 112.46 / NRRL 194 / M139) (Aspergillus nidulans)).